A 149-amino-acid chain; its full sequence is Large ribosomal subunit protein uL11 (149 aa).

It belongs to the universal ribosomal protein uL11 family. In terms of assembly, part of the ribosomal stalk of the 50S ribosomal subunit. Interacts with L10 and the large rRNA to form the base of the stalk. L10 forms an elongated spine to which L12 dimers bind in a sequential fashion forming a multimeric L10(L12)X complex. In terms of processing, one or more lysine residues are methylated.

Functionally, forms part of the ribosomal stalk which helps the ribosome interact with GTP-bound translation factors. The protein is Large ribosomal subunit protein uL11 of Methylobacterium nodulans (strain LMG 21967 / CNCM I-2342 / ORS 2060).